The chain runs to 1167 residues: Pesticidal crystal protein Cry21Aa (1167 aa).

The protein belongs to the delta endotoxin family.

Its function is as follows. Endotoxin with nematicidal activity. This Bacillus thuringiensis protein is Pesticidal crystal protein Cry21Aa (cry21Aa).